Reading from the N-terminus, the 132-residue chain is Small ribosomal subunit protein uS8 (132 aa).

This sequence belongs to the universal ribosomal protein uS8 family. Part of the 30S ribosomal subunit. Contacts proteins S5 and S12.

Functionally, one of the primary rRNA binding proteins, it binds directly to 16S rRNA central domain where it helps coordinate assembly of the platform of the 30S subunit. In Enterococcus faecalis (strain ATCC 700802 / V583), this protein is Small ribosomal subunit protein uS8.